The chain runs to 579 residues: Arginine--tRNA ligase (579 aa).

A 'HIGH' region motif is present at residues 136 to 146 (ANPTGPLHIGH).

This sequence belongs to the class-I aminoacyl-tRNA synthetase family. In terms of assembly, monomer.

It localises to the cytoplasm. The catalysed reaction is tRNA(Arg) + L-arginine + ATP = L-arginyl-tRNA(Arg) + AMP + diphosphate. This is Arginine--tRNA ligase from Anaplasma marginale (strain St. Maries).